A 251-amino-acid polypeptide reads, in one-letter code: ATP synthase subunit a (251 aa).

Helical transmembrane passes span 14–34, 78–98, 107–127, 174–194, and 196–216; these read GFVKLNGTIIYTWLLMLLLAV, YLPFLGTLFVFVAVANLFAVF, SLSTTVALAICVFVAVPFYGI, MILAIMLIITPFIFPVVMGVL, and LLIGGVQAYIFSILATVYIAA. Residues 224–251 are disordered; that stretch reads NAGASDDEGGEDAKSACAAGGKICKHKP.

It belongs to the ATPase A chain family. F-type ATPases have 2 components, CF(1) - the catalytic core - and CF(0) - the membrane proton channel. CF(1) has five subunits: alpha(3), beta(3), gamma(1), delta(1), epsilon(1). CF(0) has three main subunits: a(1), b(2) and c(9-12). The alpha and beta chains form an alternating ring which encloses part of the gamma chain. CF(1) is attached to CF(0) by a central stalk formed by the gamma and epsilon chains, while a peripheral stalk is formed by the delta and b chains.

It localises to the cell inner membrane. Its function is as follows. Key component of the proton channel; it plays a direct role in the translocation of protons across the membrane. This Nitrosospira multiformis (strain ATCC 25196 / NCIMB 11849 / C 71) protein is ATP synthase subunit a.